We begin with the raw amino-acid sequence, 369 residues long: Caffeine synthase 1 (369 aa).

Tyr24 provides a ligand contact to S-adenosyl-L-homocysteine. Thr31 serves as a coordination point for caffeine. S-adenosyl-L-homocysteine is bound by residues Cys66, Asn71, Asp103, Leu104, Ser138, and Phe139. Caffeine-binding residues include Tyr156, His159, and Trp160. Asn177 contacts Mg(2+). Position 225 (Arg225) interacts with caffeine. Asp263, Phe265, and Asn266 together coordinate Mg(2+). Phe321 is a binding site for caffeine.

This sequence belongs to the methyltransferase superfamily. Type-7 methyltransferase family. Mg(2+) is required as a cofactor.

It catalyses the reaction theobromine + S-adenosyl-L-methionine = caffeine + S-adenosyl-L-homocysteine + H(+). The enzyme catalyses 7-methylxanthine + S-adenosyl-L-methionine = theobromine + S-adenosyl-L-homocysteine + H(+). The protein operates within alkaloid biosynthesis. In terms of biological role, involved in the biosynthesis of caffeine. Catalyzes the conversion of 7-methylxanthine (7mX) to theobromine and of theobromine to caffeine. This Camellia crassicolumna (Evergreen tea) protein is Caffeine synthase 1.